The sequence spans 116 residues: Large ribosomal subunit protein bL19 (116 aa).

It belongs to the bacterial ribosomal protein bL19 family.

Functionally, this protein is located at the 30S-50S ribosomal subunit interface and may play a role in the structure and function of the aminoacyl-tRNA binding site. This is Large ribosomal subunit protein bL19 from Staphylococcus saprophyticus subsp. saprophyticus (strain ATCC 15305 / DSM 20229 / NCIMB 8711 / NCTC 7292 / S-41).